An 82-amino-acid chain; its full sequence is Small ribosomal subunit protein bS16 (82 aa).

The protein belongs to the bacterial ribosomal protein bS16 family.

This Proteus mirabilis (strain HI4320) protein is Small ribosomal subunit protein bS16.